We begin with the raw amino-acid sequence, 298 residues long: Acetylglutamate kinase (298 aa).

Substrate is bound by residues 66 to 67 (GG), Arg88, and Asn193.

This sequence belongs to the acetylglutamate kinase family. ArgB subfamily.

Its subcellular location is the cytoplasm. It catalyses the reaction N-acetyl-L-glutamate + ATP = N-acetyl-L-glutamyl 5-phosphate + ADP. It functions in the pathway amino-acid biosynthesis; L-arginine biosynthesis; N(2)-acetyl-L-ornithine from L-glutamate: step 2/4. Functionally, catalyzes the ATP-dependent phosphorylation of N-acetyl-L-glutamate. This chain is Acetylglutamate kinase, found in Methanosphaera stadtmanae (strain ATCC 43021 / DSM 3091 / JCM 11832 / MCB-3).